The sequence spans 452 residues: Neuromedin-K receptor (452 aa).

The Extracellular segment spans residues 1–71 (MASVPRGENW…TNQFVQPSWR (71 aa)). N-linked (GlcNAc...) asparagine glycosylation is found at Asn9, Asn23, Asn40, and Asn60. Residues 72-94 (IALWSLAYGLVVAVAVFGNLIVI) form a helical membrane-spanning segment. Over 95–104 (WIILAHKRMR) the chain is Cytoplasmic. Residues 105–126 (TVTNYFLVNLAFSDASVAAFNT) traverse the membrane as a helical segment. Topologically, residues 127-146 (LINFIYGLHSEWYFGANYCR) are extracellular. An intrachain disulfide couples Cys145 to Cys220. A helical membrane pass occupies residues 147-168 (FQNFFPITAVFASIYSMTAIAV). The Cytoplasmic portion of the chain corresponds to 169–188 (DRYMAIIDPLKPRLSATATK). A helical transmembrane segment spans residues 189–209 (IVIGSIWILAFLLAFPQCLYS). Residues 210–232 (KIKVMPGRTLCYVQWPEGPKQHF) lie on the Extracellular side of the membrane. The chain crosses the membrane as a helical span at residues 233 to 257 (TYHIIVIILVYCFPLLIMGVTYTIV). Topologically, residues 258–286 (GITLWGGEIPGDTCDKYHEQLKAKRKVVK) are cytoplasmic. A helical membrane pass occupies residues 287–308 (MMIIVVVTFAICWLPYHVYFIL). At 309–321 (TAIYQQLNRWKYI) the chain is on the extracellular side. The chain crosses the membrane as a helical span at residues 322–346 (QQVYLASFWLAMSSTMYNPIIYCCL). Over 347–452 (NKRFRAGFKR…SPYTSVDEYS (106 aa)) the chain is Cytoplasmic. Cys361 carries the S-palmitoyl cysteine lipid modification. Residues 400–452 (FDPNDGDPTKSSRKKRAVPRDPSANGCSHRGSKSASTTSSFISSPYTSVDEYS) form a disordered region. Residues 432-452 (KSASTTSSFISSPYTSVDEYS) show a composition bias toward low complexity.

This sequence belongs to the G-protein coupled receptor 1 family. In terms of processing, the anchoring of this receptor to the plasma membrane is probably mediated by the palmitoylation of a cysteine residue.

It is found in the cell membrane. In terms of biological role, this is a receptor for the tachykinin neuropeptide neuromedin-K (neurokinin B). It is associated with G proteins that activate a phosphatidylinositol-calcium second messenger system. The rank order of affinity of this receptor to tachykinins is: neuromedin-K &gt; substance K &gt; substance P. The chain is Neuromedin-K receptor (Tacr3) from Rattus norvegicus (Rat).